A 156-amino-acid polypeptide reads, in one-letter code: Protein archease-like (156 aa).

The Ca(2+) site is built by Asp-25, Asp-155, and Ile-156.

This sequence belongs to the archease family.

Its function is as follows. Component of the tRNA-splicing ligase complex required to facilitate the enzymatic turnover of catalytic subunit RtcB. Plays an important role in a RNA repair and splicing pathway which controls axon regeneration in response to peripheral (PNS) and central nervous system (CNS) injury, by activating splicing of Xbp1 to promote axon regeneration in response to axotomy. The polypeptide is Protein archease-like (Drosophila melanogaster (Fruit fly)).